A 378-amino-acid chain; its full sequence is GTPase Obg (378 aa).

Positions 1–159 (MKFVDEATIE…RRLRLELKVL (159 aa)) constitute an Obg domain. Residues 160–336 (ADVGLLGLPN…LIWALQDYLD (177 aa)) enclose the OBG-type G domain. GTP contacts are provided by residues 166-173 (GLPNAGKS), 191-195 (FTTLH), 213-216 (DIPG), 288-291 (NKLD), and 317-319 (SGL). Mg(2+) is bound by residues S173 and T193. Residues 345–378 (AQDQADGTYVAEDPRFDATRSDAAPPGAPRGGDE) are disordered.

This sequence belongs to the TRAFAC class OBG-HflX-like GTPase superfamily. OBG GTPase family. As to quaternary structure, monomer. Mg(2+) serves as cofactor.

The protein resides in the cytoplasm. Its function is as follows. An essential GTPase which binds GTP, GDP and possibly (p)ppGpp with moderate affinity, with high nucleotide exchange rates and a fairly low GTP hydrolysis rate. Plays a role in control of the cell cycle, stress response, ribosome biogenesis and in those bacteria that undergo differentiation, in morphogenesis control. The sequence is that of GTPase Obg from Bordetella petrii (strain ATCC BAA-461 / DSM 12804 / CCUG 43448).